A 315-amino-acid polypeptide reads, in one-letter code: Methionyl-tRNA formyltransferase (315 aa).

The N-terminal domain stretch occupies residues 2–189 (SESLRIIFAG…LITTLKQLAD (188 aa)). 113–116 (SLLP) contacts (6S)-5,6,7,8-tetrahydrofolate. Positions 210–315 (KEEARIDWSL…EWFVPGNRLV (106 aa)) are C-terminal domain.

The protein belongs to the Fmt family. As to quaternary structure, monomer.

The catalysed reaction is L-methionyl-tRNA(fMet) + (6R)-10-formyltetrahydrofolate = N-formyl-L-methionyl-tRNA(fMet) + (6S)-5,6,7,8-tetrahydrofolate + H(+). With respect to regulation, activity is optimum in the presence of Mg(2+) and K(+). Functionally, attaches a formyl group to the free amino group of methionyl-tRNA(fMet). The formyl group appears to play a dual role in the initiator identity of N-formylmethionyl-tRNA by promoting its recognition by IF2 and preventing the misappropriation of this tRNA by the elongation apparatus. The polypeptide is Methionyl-tRNA formyltransferase (Escherichia coli (strain K12)).